The chain runs to 398 residues: Phosphoglycerate kinase (398 aa).

Substrate contacts are provided by residues 23–25, R38, 61–64, R120, and R153; these read DLN and HFGR. ATP contacts are provided by residues K203, E325, and 355 to 358; that span reads GGDT.

Belongs to the phosphoglycerate kinase family. In terms of assembly, monomer.

The protein localises to the cytoplasm. It carries out the reaction (2R)-3-phosphoglycerate + ATP = (2R)-3-phospho-glyceroyl phosphate + ADP. Its pathway is carbohydrate degradation; glycolysis; pyruvate from D-glyceraldehyde 3-phosphate: step 2/5. In Mesorhizobium japonicum (strain LMG 29417 / CECT 9101 / MAFF 303099) (Mesorhizobium loti (strain MAFF 303099)), this protein is Phosphoglycerate kinase.